The sequence spans 49 residues: Small, acid-soluble spore protein K (49 aa).

A disordered region spans residues 1-49; the sequence is MRNKAKGFPNQVNHKFEGEPGATDAYASKRPNGETNTRPQERMRASGKR. The span at 39 to 49 shows a compositional bias: basic and acidic residues; the sequence is PQERMRASGKR.

This sequence belongs to the SspK family.

Its subcellular location is the spore core. The chain is Small, acid-soluble spore protein K from Bacillus pumilus (strain SAFR-032).